The sequence spans 303 residues: N-acetyl-D-glucosamine kinase (303 aa).

ATP-binding positions include 4–11 (GFDIGGTK) and 133–140 (GVGGGLIF). Residues histidine 157, cysteine 177, cysteine 179, and cysteine 184 each coordinate Zn(2+).

The protein belongs to the ROK (NagC/XylR) family. NagK subfamily.

It carries out the reaction N-acetyl-D-glucosamine + ATP = N-acetyl-D-glucosamine 6-phosphate + ADP + H(+). It functions in the pathway cell wall biogenesis; peptidoglycan recycling. Catalyzes the phosphorylation of N-acetyl-D-glucosamine (GlcNAc) derived from cell-wall degradation, yielding GlcNAc-6-P. This Escherichia coli O6:H1 (strain CFT073 / ATCC 700928 / UPEC) protein is N-acetyl-D-glucosamine kinase.